The chain runs to 122 residues: Large ribosomal subunit protein uL14 (122 aa).

This sequence belongs to the universal ribosomal protein uL14 family. In terms of assembly, part of the 50S ribosomal subunit. Forms a cluster with proteins L3 and L19. In the 70S ribosome, L14 and L19 interact and together make contacts with the 16S rRNA in bridges B5 and B8.

In terms of biological role, binds to 23S rRNA. Forms part of two intersubunit bridges in the 70S ribosome. This is Large ribosomal subunit protein uL14 from Bacillus cytotoxicus (strain DSM 22905 / CIP 110041 / 391-98 / NVH 391-98).